The chain runs to 81 residues: Small ribosomal subunit protein bS18 (81 aa).

This sequence belongs to the bacterial ribosomal protein bS18 family. As to quaternary structure, part of the 30S ribosomal subunit. Forms a tight heterodimer with protein bS6.

Functionally, binds as a heterodimer with protein bS6 to the central domain of the 16S rRNA, where it helps stabilize the platform of the 30S subunit. This is Small ribosomal subunit protein bS18 from Parvibaculum lavamentivorans (strain DS-1 / DSM 13023 / NCIMB 13966).